The following is a 449-amino-acid chain: Tubulin alpha-8 chain (449 aa).

The MREC motif motif lies at 1–4 (MREC). Positions 11, 71, 140, 144, 145, 179, 206, and 228 each coordinate GTP. Glu71 is a binding site for Mg(2+). The active site involves Glu254.

Belongs to the tubulin family. In terms of assembly, dimer of alpha and beta chains. A typical microtubule is a hollow water-filled tube with an outer diameter of 25 nm and an inner diameter of 15 nM. Alpha-beta heterodimers associate head-to-tail to form protofilaments running lengthwise along the microtubule wall with the beta-tubulin subunit facing the microtubule plus end conferring a structural polarity. Microtubules usually have 13 protofilaments but different protofilament numbers can be found in some organisms and specialized cells. Mg(2+) is required as a cofactor. In terms of processing, some glutamate residues at the C-terminus are polyglycylated, resulting in polyglycine chains on the gamma-carboxyl group. Glycylation is mainly limited to tubulin incorporated into axonemes (cilia and flagella) whereas glutamylation is prevalent in neuronal cells, centrioles, axonemes, and the mitotic spindle. Both modifications can coexist on the same protein on adjacent residues, and lowering polyglycylation levels increases polyglutamylation, and reciprocally. Cilia and flagella glycylation is required for their stability and maintenance. Flagella glycylation controls sperm motility. Some glutamate residues at the C-terminus are polyglutamylated, resulting in polyglutamate chains on the gamma-carboxyl group. Polyglutamylation plays a key role in microtubule severing by spastin (SPAST). SPAST preferentially recognizes and acts on microtubules decorated with short polyglutamate tails: severing activity by SPAST increases as the number of glutamates per tubulin rises from one to eight, but decreases beyond this glutamylation threshold. Glutamylation is also involved in cilia motility. Post-translationally, the C-terminal phenylalanine residue is cleaved by MATCAP1/KIAA0895L.

Its subcellular location is the cytoplasm. It localises to the cytoskeleton. The enzyme catalyses GTP + H2O = GDP + phosphate + H(+). Tubulin is the major constituent of microtubules, a cylinder consisting of laterally associated linear protofilaments composed of alpha- and beta-tubulin heterodimers. Microtubules grow by the addition of GTP-tubulin dimers to the microtubule end, where a stabilizing cap forms. Below the cap, tubulin dimers are in GDP-bound state, owing to GTPase activity of alpha-tubulin. This is Tubulin alpha-8 chain (Tuba8) from Rattus norvegicus (Rat).